The following is a 746-amino-acid chain: Hyperosmolality-gated Ca2+ permeable channel 2.1 (746 aa).

10 helical membrane passes run 3-23 (ISAL…LLSL), 90-110 (MVIF…AFVL), 144-164 (LWVH…LLYF), 357-377 (IATL…VTFI), 405-425 (VITG…VPPL), 445-465 (ACIK…ILSG), 492-512 (AGFF…CEIM), 560-580 (VIAP…YLIY), 601-621 (IFHN…LGFF), and 623-643 (LKLS…TLLF). Residues 692 to 702 (LHSQKSSSKAE) show a composition bias toward polar residues. The disordered stretch occupies residues 692–723 (LHSQKSSSKAECSNPFKKQELPDPEKLKPEEG). A compositionally biased stretch (basic and acidic residues) spans 708 to 723 (KKQELPDPEKLKPEEG).

This sequence belongs to the CSC1 (TC 1.A.17) family.

The protein resides in the membrane. In terms of biological role, acts as an osmosensitive calcium-permeable cation channel. The sequence is that of Hyperosmolality-gated Ca2+ permeable channel 2.1 from Arabidopsis thaliana (Mouse-ear cress).